A 219-amino-acid polypeptide reads, in one-letter code: Oligoribonuclease (219 aa).

The region spanning 30–193 is the Exonuclease domain; it reads LVWLDMEMTG…ADIVESIEEL (164 aa). Residue Tyr151 is part of the active site.

The protein belongs to the oligoribonuclease family.

It is found in the cytoplasm. Functionally, 3'-to-5' exoribonuclease specific for small oligoribonucleotides. The protein is Oligoribonuclease of Ralstonia nicotianae (strain ATCC BAA-1114 / GMI1000) (Ralstonia solanacearum).